A 124-amino-acid polypeptide reads, in one-letter code: V-type proton ATPase subunit F 1 (124 aa).

The protein belongs to the V-ATPase F subunit family. As to quaternary structure, V-ATPase is a heteromultimeric enzyme made up of two complexes: the ATP-hydrolytic V1 complex and the proton translocation V0 complex. The V1 complex consists of three catalytic AB heterodimers that form a heterohexamer, three peripheral stalks each consisting of EG heterodimers, one central rotor including subunits D and F, and the regulatory subunits C and H. The proton translocation complex V0 consists of the proton transport subunit a, a ring of proteolipid subunits c9c'', rotary subunit d, subunits e and f, and the accessory subunits VhaAC45 and ATP6AP2.

In terms of biological role, subunit of the V1 complex of vacuolar(H+)-ATPase (V-ATPase), a multisubunit enzyme composed of a peripheral complex (V1) that hydrolyzes ATP and a membrane integral complex (V0) that translocates protons. V-ATPase is responsible for acidifying and maintaining the pH of intracellular compartments and in some cell types, is targeted to the plasma membrane, where it is responsible for acidifying the extracellular environment. The sequence is that of V-type proton ATPase subunit F 1 (Vha14) from Drosophila pseudoobscura pseudoobscura (Fruit fly).